The sequence spans 313 residues: Protein FixB (313 aa).

255 to 283 is a binding site for FAD; the sequence is LYLAVGISGQIQHMVGANASQTIFAINKD.

It belongs to the ETF alpha-subunit/FixB family. In terms of assembly, heterodimer of FixA and FixB.

Its pathway is amine and polyamine metabolism; carnitine metabolism. Its function is as follows. Required for anaerobic carnitine reduction. May bring reductant to CaiA. The protein is Protein FixB of Escherichia coli O6:K15:H31 (strain 536 / UPEC).